The primary structure comprises 645 residues: MVEKRSRQSSSSGSEFSVPPDVDNPPLSIPLKTLSDRYQLIEKLGAGSFGCVTLAKAQFPLSNILGKQHDIRGTLMDQPKNGHQNYITKTQGVVAIKTMMTKLHTLQDYTRVREIKFILAIPANDHLIQIFEVFIDSENYQLHIVMECMEQNLYQMMKHRRRRVFSIPSLKSILSQILAGLKHIHEHNFFHRDLKPENILITPSTQYFEKEYMNQIGYQDNYVIKLADFGLARHVENKNPYTAYVSTRWYRSPEILLRSGYYSKPLDIWAFGCVAVEVTVFRALFPGANEIDQIWKILEVLGTPIKRSDFVNTNHITAPPPGGFWDDASNLVHKLNLKLPYVEGSSLDHLLSSSQLSDLSEVVKKCLRWDPNERATAQELCEMPFFENTVASQVDARGNVTNTEQALIFAGINPVATNTKPIYFNSSTKLPAETESNDIDISNNDHDSHAMCSPTLNQEKLTLVEFLNEFVEEDNDDHSIPDVGTDSTISDSIDETELSKEIRNNLALCQLPDEEVLDHSLSNIRQLTNDIEIINKDEADNMEQLFFDLEIPEKDEFQRKQPFNEHADIDEDIVLPYVNNSNYTHTDRSHHRGDNVLGDASLGDSFNSMPDFTPRNFLIPTLKKSREKFEPHLSNSNQHFGNVTF.

Residues 1–24 form a disordered region; the sequence is MVEKRSRQSSSSGSEFSVPPDVDN. The segment covering 8–17 has biased composition (low complexity); the sequence is QSSSSGSEFS. Residues 38 to 386 form the Protein kinase domain; it reads YQLIEKLGAG…AQELCEMPFF (349 aa). Residues 44-52 and Lys-67 contribute to the ATP site; that span reads LGAGSFGCV. Asp-193 acts as the Proton acceptor in catalysis.

The protein belongs to the protein kinase superfamily. Ser/Thr protein kinase family.

The catalysed reaction is L-seryl-[protein] + ATP = O-phospho-L-seryl-[protein] + ADP + H(+). It carries out the reaction L-threonyl-[protein] + ATP = O-phospho-L-threonyl-[protein] + ADP + H(+). Protein kinase which is essential for the initiation of meiosis and sporulation. The polypeptide is Meiosis induction protein kinase IME2/SME1 (IME2) (Saccharomyces cerevisiae (strain ATCC 204508 / S288c) (Baker's yeast)).